A 365-amino-acid polypeptide reads, in one-letter code: Homeobox protein Nkx-6.1 (365 aa).

The tract at residues 35–136 (LYPAAYPPLP…SSSSASATSA (102 aa)) is disordered. 3 stretches are compositionally biased toward low complexity: residues 48-59 (PSSSSSSSSSSS), 69-92 (PGGL…QLSA), and 110-136 (ASGA…ATSA). The repressor domain stretch occupies residues 102–269 (LSRPSMPVAS…KYLAGPERAR (168 aa)). R190 bears the Asymmetric dimethylarginine mark. A DNA-binding region (homeobox) is located at residues 237 to 296 (RKHTRPTFSGQQIFALEKTFEQTKYLAGPERARLAYSLGMTESQVKVWFQNRRTKWRKKH). A disordered region spans residues 295-365 (KHAAEMATAK…LHASEAEGSS (71 aa)). The segment covering 305–318 (KKQDSETERLKGTS) has biased composition (basic and acidic residues). The interval 307–365 (QDSETERLKGTSENEEDDDDYNKPLDPNSDDEKITQLLKKHKSSGGSLLLHASEAEGSS) is involved in DNA-binding.

Pancreatic beta cells.

It localises to the nucleus. In terms of biological role, transcription factor which binds to specific A/T-rich DNA sequences in the promoter regions of a number of genes. Involved in the development of insulin-producing beta cells in the islets of Langerhans at the secondary transition. Together with NKX2-2 and IRX3 acts to restrict the generation of motor neurons to the appropriate region of the neural tube. Belongs to the class II proteins of neuronal progenitor factors, which are induced by SHH signals. The protein is Homeobox protein Nkx-6.1 (Nkx6-1) of Rattus norvegicus (Rat).